Reading from the N-terminus, the 201-residue chain is UPF0301 protein MSMEG_6921/MSMEI_6732 (201 aa).

Belongs to the UPF0301 (AlgH) family.

The protein is UPF0301 protein MSMEG_6921/MSMEI_6732 of Mycolicibacterium smegmatis (strain ATCC 700084 / mc(2)155) (Mycobacterium smegmatis).